The following is a 578-amino-acid chain: Signal peptide peptidase-like 2B (578 aa).

Positions 1–19 (MAAARLAAALLLLAAQVAC) are cleaved as a signal peptide. Residues 20-168 (EFGVLRVVSQ…APSEPVMDYN (149 aa)) lie on the Lumenal side of the membrane. Positions 61-145 (LRDLSTTQLC…LLSHRDLQDI (85 aa)) constitute a PA domain. 2 N-linked (GlcNAc...) asparagine glycosylation sites follow: asparagine 91 and asparagine 123. The helical transmembrane segment at 169–189 (MVIIFVMAVGTVAIGGYWAGS) threads the bilayer. The Cytoplasmic segment spans residues 190–216 (HDVKKYMKHKRDDGPEKQEDEAVDVTP). The chain crosses the membrane as a helical span at residues 217 to 237 (VMICVFVVMCCFMLVLLYYFY). Topologically, residues 238–239 (DR) are lumenal. Residues 240–260 (LVYVIIGIFCLASSTGLYSCL) form a helical membrane-spanning segment. The Cytoplasmic segment spans residues 261–286 (APFVRKLPFCTCRVPDNNLPYFHKRP). Residues 287 to 307 (QARMLLLALFCVTVSVVWGIF) form a helical membrane-spanning segment. The Lumenal segment spans residues 308-312 (RNEDQ). The chain crosses the membrane as a helical span at residues 313–333 (WAWVLQDTLGIAFCLYMLKTI). The Cytoplasmic segment spans residues 334–341 (RLPTFKAC). Residues 342-362 (TLLLLVLFIYDIFFVFITPFL) traverse the membrane as a helical segment. Aspartate 352 is a catalytic residue. The Lumenal portion of the chain corresponds to 363 to 405 (TKSGNSIMVEVATGPSNSSTHEKLPMVLKVPRLNTSPLSLCDR). Residues 406-426 (PFSLLGFGDILVPGLLVAYCH) form a helical membrane-spanning segment. Aspartate 414 is an active-site residue. Residues 427 to 438 (RFDIQVQSSRIY) are Cytoplasmic-facing. A helical membrane pass occupies residues 439–459 (FVACTIAYGLGLLVTFVALVL). The Lumenal segment spans residues 460-463 (MQRG). A helical membrane pass occupies residues 464 to 484 (QPALLYLVPCTLLTSCTVALW). A PAL motif is present at residues 465–467 (PAL). Residues 485 to 578 (RRELGAFWTG…IPVVKPETSA (94 aa)) are Cytoplasmic-facing. The segment at 502–578 (PQTPWAATQG…IPVVKPETSA (77 aa)) is disordered. The segment covering 520–529 (SSLSEQPPSE) has biased composition (low complexity).

The protein belongs to the peptidase A22B family. In terms of assembly, monomer. Homodimer. Interacts with ITM2B and TNF. Post-translationally, glycosylated.

It localises to the cell membrane. The protein localises to the golgi apparatus membrane. The protein resides in the lysosome membrane. It is found in the endosome membrane. Its subcellular location is the membrane. Functionally, intramembrane-cleaving aspartic protease (I-CLiP) that cleaves type II membrane signal peptides in the hydrophobic plane of the membrane. Functions in ITM2B and TNF processing. Catalyzes the intramembrane cleavage of the anchored fragment of shed TNF-alpha (TNF), which promotes the release of the intracellular domain (ICD) for signaling to the nucleus. May play a role in the regulation of innate and adaptive immunity. This chain is Signal peptide peptidase-like 2B, found in Mus musculus (Mouse).